The sequence spans 224 residues: Redox-sensing transcriptional repressor Rex (224 aa).

Residues 17-56 (RYHRYLEELLKNDVKRISSRELSEKMGVTASQIRQDLNNF) constitute a DNA-binding region (H-T-H motif). Residue 91 to 96 (GAGNLG) participates in NAD(+) binding.

Belongs to the transcriptional regulatory Rex family. As to quaternary structure, homodimer.

Its subcellular location is the cytoplasm. Its function is as follows. Modulates transcription in response to changes in cellular NADH/NAD(+) redox state. This is Redox-sensing transcriptional repressor Rex from Thermoanaerobacter sp. (strain X514).